A 398-amino-acid polypeptide reads, in one-letter code: NADH-ubiquinone oxidoreductase 49 kDa subunit (398 aa).

It belongs to the complex I 49 kDa subunit family.

It localises to the mitochondrion. The enzyme catalyses a ubiquinone + NADH + 5 H(+)(in) = a ubiquinol + NAD(+) + 4 H(+)(out). Functionally, core subunit of the mitochondrial membrane respiratory chain NADH dehydrogenase (Complex I) that is believed to belong to the minimal assembly required for catalysis. Complex I functions in the transfer of electrons from NADH to the respiratory chain. The immediate electron acceptor for the enzyme is believed to be ubiquinone. Component of the iron-sulfur (IP) fragment of the enzyme. Component of the iron-sulfur (IP) fragment of the enzyme. The sequence is that of NADH-ubiquinone oxidoreductase 49 kDa subunit (NAD7) from Pylaiella littoralis (Seaweed).